The primary structure comprises 160 residues: Prostaglandin E synthase 3 (160 aa).

The CS domain occupies 1-90; sequence MQPASAKWYD…ESGQSWPRLT (90 aa). N6-acetyllysine is present on Lys-33. A Glycyl lysine isopeptide (Lys-Gly) (interchain with G-Cter in SUMO2) cross-link involves residue Lys-35. At Ser-44 the chain carries Phosphoserine. Lys-65 is covalently cross-linked (Glycyl lysine isopeptide (Lys-Gly) (interchain with G-Cter in SUMO2)). Residues Ser-85, Ser-100, Ser-113, and Ser-118 each carry the phosphoserine modification. Residues 118-160 form a disordered region; the sequence is SNFDRFSEMMDHMGGDEDVDLPEVDGADDDSQDSDDEKMPDLE. Over residues 122 to 132 the composition is skewed to basic and acidic residues; sequence RFSEMMDHMGG. Acidic residues predominate over residues 133-153; sequence DEDVDLPEVDGADDDSQDSDD. Phosphoserine occurs at positions 148 and 151. The PXLE motif motif lies at 157-160; it reads PDLE.

The protein belongs to the p23/wos2 family. In terms of assembly, probably forms a complex composed of chaperones HSP90 and HSP70, co-chaperones STIP1/HOP, CDC37, PPP5C, PTGES3/p23, TSC1 and client protein TSC2. Binds to the progesterone receptor. Interacts with TERT; the interaction, together with HSP90AA1, is required for correct assembly and stabilization of the telomerase holoenzyme complex. Interacts (via PXLE motif) with EGLN1/PHD2, recruiting EGLN1/PHD2 to the HSP90 pathway to facilitate HIF alpha proteins hydroxylation. Interacts with HSP90AA1, FLCN, FNIP1 and FNIP2. In terms of processing, proteolytically cleaved by caspase-7 (CASP7) in response to apoptosis, leading to its inactivation. As to expression, expressed in testis, kidney, bladder and ovary.

The protein resides in the cytoplasm. The enzyme catalyses prostaglandin H2 = prostaglandin E2. Its pathway is lipid metabolism; prostaglandin biosynthesis. In terms of biological role, cytosolic prostaglandin synthase that catalyzes the oxidoreduction of prostaglandin endoperoxide H2 (PGH2) to prostaglandin E2 (PGE2). Molecular chaperone that localizes to genomic response elements in a hormone-dependent manner and disrupts receptor-mediated transcriptional activation, by promoting disassembly of transcriptional regulatory complexes. Facilitates HIF alpha proteins hydroxylation via interaction with EGLN1/PHD2, leading to recruit EGLN1/PHD2 to the HSP90 pathway. This chain is Prostaglandin E synthase 3 (Ptges3), found in Mus musculus (Mouse).